Reading from the N-terminus, the 180-residue chain is Ribulose bisphosphate carboxylase small subunit 1A, chloroplastic (180 aa).

The N-terminal 54 residues, 1 to 54 (MASSMLSSATMVASPAQATMVAPFNGLKSSAAFPATRKANNDITSITSNGGRVN), are a transit peptide targeting the chloroplast. Residue S113 is modified to Phosphoserine.

The protein belongs to the RuBisCO small chain family. Heterohexadecamer of 8 large and 8 small subunits.

It is found in the plastid. Its subcellular location is the chloroplast membrane. It localises to the chloroplast stroma. In terms of biological role, ruBisCO catalyzes two reactions: the carboxylation of D-ribulose 1,5-bisphosphate, the primary event in carbon dioxide fixation, as well as the oxidative fragmentation of the pentose substrate. Both reactions occur simultaneously and in competition at the same active site. Although the small subunit is not catalytic it is essential for maximal activity. In Arabidopsis thaliana (Mouse-ear cress), this protein is Ribulose bisphosphate carboxylase small subunit 1A, chloroplastic (RBCS-1A).